Here is a 123-residue protein sequence, read N- to C-terminus: Transmembrane protein 049L (123 aa).

2 helical membrane passes run 67–87 and 104–121; these read VFGA…LWLV and LSLQ…GVYN.

It is found in the membrane. This chain is Transmembrane protein 049L, found in Acheta domesticus (House cricket).